Reading from the N-terminus, the 351-residue chain is NAD-dependent protein deacetylase SIR2rp1 (351 aa).

The 316-residue stretch at 10–325 (HVVGEPTFEG…RSFAQALGFG (316 aa)) folds into the Deacetylase sirtuin-type domain. Residues 37-57 (GAGI…TGLY) and 122-125 (QNID) each bind NAD(+). Histidine 142 functions as the Proton acceptor in the catalytic mechanism. Cysteine 150, cysteine 153, cysteine 174, and cysteine 177 together coordinate Zn(2+). Residues 213-215 (GTS) and 238-240 (NLE) contribute to the NAD(+) site. A disordered region spans residues 260 to 284 (SSYRLSTGNGNGSKISSGDSSNSSS). The segment covering 265–284 (STGNGNGSKISSGDSSNSSS) has biased composition (low complexity). NAD(+) is bound at residue cysteine 311.

It belongs to the sirtuin family. Class I subfamily. It depends on Zn(2+) as a cofactor.

It is found in the nucleus. The protein localises to the chromosome. It localises to the telomere. It catalyses the reaction N(6)-acetyl-L-lysyl-[protein] + NAD(+) + H2O = 2''-O-acetyl-ADP-D-ribose + nicotinamide + L-lysyl-[protein]. Functionally, NAD-dependent protein deacetylase, which is involved in repression of RNA polymerase I-mediated expression immediately adjacent to telomeres. It is however not involved in antigenic variation and subtelomeric variant surface glycoprotein (VSG) gene silencing. Plays a role in DNA damage response. Also has ADP-ribosylation activity in vitro. In Trypanosoma brucei brucei (strain 927/4 GUTat10.1), this protein is NAD-dependent protein deacetylase SIR2rp1 (SIR2rp1).